The following is a 143-amino-acid chain: Hemoglobin subunit alpha (143 aa).

N-acetylserine is present on Ser2. In terms of domain architecture, Globin spans Ser2–Arg143. His60 contributes to the O2 binding site. His89 contributes to the heme b binding site.

It belongs to the globin family. As to quaternary structure, heterotetramer of two alpha chains and two beta chains. In terms of tissue distribution, red blood cells.

Involved in oxygen transport from gills to the various peripheral tissues. This is Hemoglobin subunit alpha (hba) from Cyprinus carpio (Common carp).